The chain runs to 416 residues: Probable 26S proteasome regulatory subunit rpn-6.2 (416 aa).

The 170-residue stretch at 217–386 folds into the PCI domain; the sequence is YKTSFSYFYE…DTVVVYPKAD (170 aa).

Belongs to the proteasome subunit S9 family. In terms of assembly, component of the lid subcomplex of the 19S proteasome regulatory particle complex (also named PA700 complex). The 26S proteasome consists of a 20S proteasome core and two 19S regulatory subunits.

Its function is as follows. Component of the lid subcomplex of the 26S proteasome, a multiprotein complex involved in the ATP-dependent degradation of ubiquitinated proteins. In the complex, rpn-6.2 is required for proteasome assembly. The sequence is that of Probable 26S proteasome regulatory subunit rpn-6.2 (rpn-6.2) from Caenorhabditis elegans.